The chain runs to 336 residues: Ankyrin repeat and SOCS box protein 1 (336 aa).

6 ANK repeats span residues 37–69 (CDDTRLHDAAYVGDLQTLRNLLQEESYRSRINE), 78–107 (LPCTPLRIAATAGHGNCVDFLIRKGAEVDL), 111–140 (KGQTALYVAVVNGHLESTEILLEAGADPNG), 144–173 (HRSTPVYHASRVGRDDILKALIRYGADVDV), 192–221 (LVVCPLYISAAYHNLQCFRLLLQAGANPDF), and 236–266 (SPGCVMDAVLRHGCEAAFVSLLVEFGANLNL). In terms of domain architecture, SOCS box spans 287–336 (LQVFKEARSIPRTLLSLCRVAVRRALGKYRLHLVPSLPLPDPIKKFLLYE).

It belongs to the ankyrin SOCS box (ASB) family. Interacts with CUL5 and RNF7. In terms of tissue distribution, highest expression in testis, spleen, bone marrow and salivary gland.

It participates in protein modification; protein ubiquitination. Probable substrate-recognition component of a SCF-like ECS (Elongin-Cullin-SOCS-box protein) E3 ligase complex which mediates the ubiquitination and subsequent proteasomal degradation of target proteins. Mediates Notch-induced ubiquitination and degradation of TCF3/E2A and JAK2. May play a role in testis development. This is Ankyrin repeat and SOCS box protein 1 (Asb1) from Mus musculus (Mouse).